The primary structure comprises 156 residues: Small ribosomal subunit protein uS7 (156 aa).

Belongs to the universal ribosomal protein uS7 family. As to quaternary structure, part of the 30S ribosomal subunit. Contacts proteins S9 and S11.

Functionally, one of the primary rRNA binding proteins, it binds directly to 16S rRNA where it nucleates assembly of the head domain of the 30S subunit. Is located at the subunit interface close to the decoding center, probably blocks exit of the E-site tRNA. This chain is Small ribosomal subunit protein uS7, found in Thermomicrobium roseum (strain ATCC 27502 / DSM 5159 / P-2).